We begin with the raw amino-acid sequence, 77 residues long: Large ribosomal subunit protein bL28 (77 aa).

The protein belongs to the bacterial ribosomal protein bL28 family.

This Ralstonia pickettii (strain 12J) protein is Large ribosomal subunit protein bL28.